An 85-amino-acid polypeptide reads, in one-letter code: Large ribosomal subunit protein bL31B (85 aa).

It belongs to the bacterial ribosomal protein bL31 family. Type B subfamily. As to quaternary structure, part of the 50S ribosomal subunit.

The protein is Large ribosomal subunit protein bL31B of Serratia proteamaculans (strain 568).